The primary structure comprises 305 residues: NAD kinase (305 aa).

Catalysis depends on D88, which acts as the Proton acceptor. NAD(+)-binding positions include 88-89 (DG), R93, 162-163 (NE), K173, N192, 203-208 (TAYSFS), and Q262.

This sequence belongs to the NAD kinase family. A divalent metal cation serves as cofactor.

It is found in the cytoplasm. The enzyme catalyses NAD(+) + ATP = ADP + NADP(+) + H(+). Its function is as follows. Involved in the regulation of the intracellular balance of NAD and NADP, and is a key enzyme in the biosynthesis of NADP. Catalyzes specifically the phosphorylation on 2'-hydroxyl of the adenosine moiety of NAD to yield NADP. The chain is NAD kinase from Tropheryma whipplei (strain TW08/27) (Whipple's bacillus).